The primary structure comprises 101 residues: Protein Tat (101 aa).

The interval 1-24 is interaction with human CREBBP; the sequence is MEPVDPNLEPWKHPGSQPRTACNN. Residues 1–48 form a transactivation region; that stretch reads MEPVDPNLEPWKHPGSQPRTACNNCYCKKCCFHCQVCFTKKGLGISYG. Zn(2+) contacts are provided by cysteine 22, cysteine 25, and cysteine 27. Positions 22-37 are cysteine-rich; that stretch reads CNNCYCKKCCFHCQVC. N6-acetyllysine; by host PCAF is present on lysine 28. Zn(2+) contacts are provided by cysteine 30, histidine 33, cysteine 34, and cysteine 37. The tract at residues 38 to 48 is core; that stretch reads FTKKGLGISYG. The interval 47–101 is disordered; sequence YGRKKRRQRRRPPQDSQTHQSSLSKQPTSQLRGDPTGPTESKKKVERETETDPVH. Residues 48–57 show a composition bias toward basic residues; the sequence is GRKKRRQRRR. The Nuclear localization signal, RNA-binding (TAR), and protein transduction signature appears at 49–57; that stretch reads RKKRRQRRR. The interaction with the host capping enzyme RNGTT stretch occupies residues 49–86; it reads RKKRRQRRRPPQDSQTHQSSLSKQPTSQLRGDPTGPTE. 2 positions are modified to N6-acetyllysine; by host EP300 and GCN5L2: lysine 50 and lysine 51. Residues arginine 52 and arginine 53 each carry the asymmetric dimethylarginine; by host PRMT6 modification. Polar residues predominate over residues 61–77; it reads DSQTHQSSLSKQPTSQL. Residue lysine 71 forms a Glycyl lysine isopeptide (Lys-Gly) (interchain with G-Cter in ubiquitin) linkage. A Cell attachment site motif is present at residues 78 to 80; it reads RGD. Residues 86 to 101 show a composition bias toward basic and acidic residues; that stretch reads ESKKKVERETETDPVH.

Belongs to the lentiviruses Tat family. Interacts with host CCNT1. Associates with the P-TEFb complex composed at least of Tat, P-TEFb (CDK9 and CCNT1), TAR RNA, RNA Pol II. Recruits the HATs CREBBP, TAF1/TFIID, EP300, PCAF and GCN5L2. Interacts with host KAT5/Tip60; this interaction targets the latter to degradation. Interacts with the host deacetylase SIRT1. Interacts with host capping enzyme RNGTT; this interaction stimulates RNGTT. Binds to host KDR, and to the host integrins ITGAV/ITGB3 and ITGA5/ITGB1. Interacts with host KPNB1/importin beta-1 without previous binding to KPNA1/importin alpha-1. Interacts with EIF2AK2. Interacts with host nucleosome assembly protein NAP1L1; this interaction may be required for the transport of Tat within the nucleus, since the two proteins interact at the nuclear rim. Interacts with host C1QBP/SF2P32; this interaction involves lysine-acetylated Tat. Interacts with the host chemokine receptors CCR2, CCR3 and CXCR4. Interacts with host DPP4/CD26; this interaction may trigger an anti-proliferative effect. Interacts with host LDLR. Interacts with the host extracellular matrix metalloproteinase MMP1. Interacts with host PRMT6; this interaction mediates Tat's methylation. Interacts with, and is ubiquitinated by MDM2/Hdm2. Interacts with host PSMC3 and HTATIP2. Interacts with STAB1; this interaction may overcome SATB1-mediated repression of IL2 and IL2RA (interleukin) in T cells by binding to the same domain than HDAC1. Interacts (when acetylated) with human CDK13, thereby increasing HIV-1 mRNA splicing and promoting the production of the doubly spliced HIV-1 protein Nef. Interacts with host TBP; this interaction modulates the activity of transcriptional pre-initiation complex. Interacts with host RELA. Interacts with host PLSCR1; this interaction negatively regulates Tat transactivation activity by altering its subcellular distribution. Post-translationally, asymmetrical arginine methylation by host PRMT6 seems to diminish the transactivation capacity of Tat and affects the interaction with host CCNT1. Acetylation by EP300, CREBBP, GCN5L2/GCN5 and PCAF regulates the transactivation activity of Tat. EP300-mediated acetylation of Lys-50 promotes dissociation of Tat from the TAR RNA through the competitive binding to PCAF's bromodomain. In addition, the non-acetylated Tat's N-terminus can also interact with PCAF. PCAF-mediated acetylation of Lys-28 enhances Tat's binding to CCNT1. Lys-50 is deacetylated by SIRT1. In terms of processing, polyubiquitination by host MDM2 does not target Tat to degradation, but activates its transactivation function and fosters interaction with CCNT1 and TAR RNA. Post-translationally, phosphorylated by EIF2AK2 on serine and threonine residues adjacent to the basic region important for TAR RNA binding and function. Phosphorylation of Tat by EIF2AK2 is dependent on the prior activation of EIF2AK2 by dsRNA.

Its subcellular location is the host nucleus. It is found in the host nucleolus. It localises to the host cytoplasm. The protein localises to the secreted. Functionally, transcriptional activator that increases RNA Pol II processivity, thereby increasing the level of full-length viral transcripts. Recognizes a hairpin structure at the 5'-LTR of the nascent viral mRNAs referred to as the transactivation responsive RNA element (TAR) and recruits the cyclin T1-CDK9 complex (P-TEFb complex) that will in turn hyperphosphorylate the RNA polymerase II to allow efficient elongation. The CDK9 component of P-TEFb and other Tat-activated kinases hyperphosphorylate the C-terminus of RNA Pol II that becomes stabilized and much more processive. Other factors such as HTATSF1/Tat-SF1, SUPT5H/SPT5, and HTATIP2 are also important for Tat's function. Besides its effect on RNA Pol II processivity, Tat induces chromatin remodeling of proviral genes by recruiting the histone acetyltransferases (HATs) CREBBP, EP300 and PCAF to the chromatin. This also contributes to the increase in proviral transcription rate, especially when the provirus integrates in transcriptionally silent region of the host genome. To ensure maximal activation of the LTR, Tat mediates nuclear translocation of NF-kappa-B by interacting with host RELA. Through its interaction with host TBP, Tat may also modulate transcription initiation. Tat can reactivate a latently infected cell by penetrating in it and transactivating its LTR promoter. In the cytoplasm, Tat is thought to act as a translational activator of HIV-1 mRNAs. Extracellular circulating Tat can be endocytosed by surrounding uninfected cells via the binding to several surface receptors such as CD26, CXCR4, heparan sulfate proteoglycans (HSPG) or LDLR. Neurons are rarely infected, but they internalize Tat via their LDLR. Through its interaction with nuclear HATs, Tat is potentially able to control the acetylation-dependent cellular gene expression. Modulates the expression of many cellular genes involved in cell survival, proliferation or in coding for cytokines or cytokine receptors. Tat plays a role in T-cell and neurons apoptosis. Tat induced neurotoxicity and apoptosis probably contribute to neuroAIDS. Circulating Tat also acts as a chemokine-like and/or growth factor-like molecule that binds to specific receptors on the surface of the cells, affecting many cellular pathways. In the vascular system, Tat binds to ITGAV/ITGB3 and ITGA5/ITGB1 integrins dimers at the surface of endothelial cells and competes with bFGF for heparin-binding sites, leading to an excess of soluble bFGF. This is Protein Tat from Human immunodeficiency virus type 1 group M subtype B (isolate YU-2) (HIV-1).